The chain runs to 242 residues: tRNA pseudouridine synthase A (242 aa).

D51 (nucleophile) is an active-site residue. Y107 lines the substrate pocket.

Belongs to the tRNA pseudouridine synthase TruA family. As to quaternary structure, homodimer.

The enzyme catalyses uridine(38/39/40) in tRNA = pseudouridine(38/39/40) in tRNA. Functionally, formation of pseudouridine at positions 38, 39 and 40 in the anticodon stem and loop of transfer RNAs. This chain is tRNA pseudouridine synthase A, found in Helicobacter pylori (strain HPAG1).